A 179-amino-acid polypeptide reads, in one-letter code: Replication restart protein DnaT (179 aa).

Residues 156-179 (GGLPKRDVNTVSEPDSQIPPGFRG) form a disordered region.

It belongs to the DnaT family. As to quaternary structure, homooligomerizes. Interacts with PriB. Component of the replication restart primosome. Primosome assembly occurs via a 'hand-off' mechanism. PriA binds to replication forks, subsequently PriB then DnaT bind; DnaT then displaces ssDNA to generate the helicase loading substrate.

In terms of biological role, involved in the restart of stalled replication forks, which reloads the replicative helicase on sites other than the origin of replication. Can function in multiple replication restart pathways. Displaces ssDNA from a PriB-ssDNA complex. Probably forms a spiral filament on ssDNA. The sequence is that of Replication restart protein DnaT from Escherichia coli O81 (strain ED1a).